The chain runs to 762 residues: 5-methyltetrahydropteroyltriglutamate--homocysteine methyltransferase (762 aa).

5-methyltetrahydropteroyltri-L-glutamate-binding positions include 17–20 and K111; that span reads REWK. L-homocysteine-binding positions include 435–437 and E488; that span reads IGS. L-methionine contacts are provided by residues 435–437 and E488; that span reads IGS. Residues 519–520 and W565 contribute to the 5-methyltetrahydropteroyltri-L-glutamate site; that span reads RC. D603 is a binding site for L-homocysteine. D603 provides a ligand contact to L-methionine. 5-methyltetrahydropteroyltri-L-glutamate is bound at residue E609. Residues H645, C647, and E669 each contribute to the Zn(2+) site. H698 functions as the Proton donor in the catalytic mechanism. A Zn(2+)-binding site is contributed by C730.

It belongs to the vitamin-B12 independent methionine synthase family. The cofactor is Zn(2+).

The enzyme catalyses 5-methyltetrahydropteroyltri-L-glutamate + L-homocysteine = tetrahydropteroyltri-L-glutamate + L-methionine. Its pathway is amino-acid biosynthesis; L-methionine biosynthesis via de novo pathway; L-methionine from L-homocysteine (MetE route): step 1/1. In terms of biological role, catalyzes the transfer of a methyl group from 5-methyltetrahydrofolate to homocysteine resulting in methionine formation. The sequence is that of 5-methyltetrahydropteroyltriglutamate--homocysteine methyltransferase from Bacillus cereus (strain G9842).